The sequence spans 825 residues: Neuroligin-3 (825 aa).

The signal sequence occupies residues 1–34; that stretch reads MWLQPSLSLSPTPTVGRSLCLTLGFLSLVLRAST. Residues 35 to 686 lie on the Extracellular side of the membrane; sequence QAPAPTVNTH…NPRDYSTELS (652 aa). Asn-95 is a glycosylation site (N-linked (GlcNAc...) asparagine). Cysteines 103 and 138 form a disulfide. A disordered region spans residues 151 to 172; that stretch reads SGAKKQGEDLADNDGDEDEDIR. Acidic residues predominate over residues 159–171; that stretch reads DLADNDGDEDEDI. 2 cysteine pairs are disulfide-bonded: Cys-317–Cys-328 and Cys-487–Cys-521. The N-linked (GlcNAc...) asparagine glycan is linked to Asn-522. 2 stretches are compositionally biased toward polar residues: residues 622–633 and 654–666; these read TKVPPPDTTHSS and AYSN…SWNG. The tract at residues 622 to 668 is disordered; the sequence is TKVPPPDTTHSSHITRRPNGKTWSTKRPAISPAYSNENAPGSWNGDQ. A helical membrane pass occupies residues 687–707; it reads VTIAVGASLLFLNVLAFAALY. Residues 708–825 are Cytoplasmic-facing; sequence YRKDKRRQEP…LPHSHSTTRV (118 aa). Ser-722 carries the post-translational modification Phosphoserine. Tyr-769 is subject to Phosphotyrosine.

This sequence belongs to the type-B carboxylesterase/lipase family. Homodimer, and heterodimer with NLGN1 and NLGN2. Interacts with neurexins NRXN1, NRXN2 and NRXN3. Interaction with neurexins is mediated by heparan sulfate glycan modification on neurexin. Interacts (via its C-terminus) with DLG4/PSD-95 (via PDZ domain 3). Brain and arteries (at protein level). Detected in heart, brain, spleen, lung, liver, skeletal muscle, kidney and testis. Expressed in olfactory bulb and olfactory epithelium. Found in olfactory ensheathing glia but not in olfactory neurons, and in developing peripheral glia.

The protein localises to the cell membrane. It localises to the synapse. Its function is as follows. Cell surface protein involved in cell-cell-interactions via its interactions with neurexin family members. Plays a role in synapse function and synaptic signal transmission, and probably mediates its effects by recruiting and clustering other synaptic proteins. May promote the initial formation of synapses, but is not essential for this. May also play a role in glia-glia or glia-neuron interactions in the developing peripheral nervous system. This is Neuroligin-3 (Nlgn3) from Mus musculus (Mouse).